The primary structure comprises 220 residues: MTKQLVLFCDFDGTITENDNIIAIMKQFAPPEWEALKDDILAERISVQEGVGKMFSLLPSSLKGEIIDFLRRTTRLRAGFREFVAFTKERGIPLYIVSGGIDFFVYPLLEGLIEPERIFCNGSDFSGETIRITWPHACDGECQNGCGCCKPSLLRKLARPDGYHVVIGDSITDLAVAKQADYVMARDFLLQKCQELGLPHAPFATFFDVIDALQRMEVIV.

This sequence belongs to the HAD-like hydrolase superfamily. MtnX family.

It carries out the reaction 2-hydroxy-5-methylsulfanyl-3-oxopent-1-enyl phosphate + H2O = 1,2-dihydroxy-5-(methylsulfanyl)pent-1-en-3-one + phosphate. It functions in the pathway amino-acid biosynthesis; L-methionine biosynthesis via salvage pathway; L-methionine from S-methyl-5-thio-alpha-D-ribose 1-phosphate: step 4/6. In terms of biological role, dephosphorylates 2-hydroxy-3-keto-5-methylthiopentenyl-1-phosphate (HK-MTPenyl-1-P) yielding 1,2-dihydroxy-3-keto-5-methylthiopentene (DHK-MTPene). In Geobacillus kaustophilus (strain HTA426), this protein is 2-hydroxy-3-keto-5-methylthiopentenyl-1-phosphate phosphatase.